Here is a 479-residue protein sequence, read N- to C-terminus: Aspartyl/glutamyl-tRNA(Asn/Gln) amidotransferase subunit B (479 aa).

This sequence belongs to the GatB/GatE family. GatB subfamily. Heterotrimer of A, B and C subunits.

The enzyme catalyses L-glutamyl-tRNA(Gln) + L-glutamine + ATP + H2O = L-glutaminyl-tRNA(Gln) + L-glutamate + ADP + phosphate + H(+). It carries out the reaction L-aspartyl-tRNA(Asn) + L-glutamine + ATP + H2O = L-asparaginyl-tRNA(Asn) + L-glutamate + ADP + phosphate + 2 H(+). Allows the formation of correctly charged Asn-tRNA(Asn) or Gln-tRNA(Gln) through the transamidation of misacylated Asp-tRNA(Asn) or Glu-tRNA(Gln) in organisms which lack either or both of asparaginyl-tRNA or glutaminyl-tRNA synthetases. The reaction takes place in the presence of glutamine and ATP through an activated phospho-Asp-tRNA(Asn) or phospho-Glu-tRNA(Gln). In Streptococcus equi subsp. zooepidemicus (strain MGCS10565), this protein is Aspartyl/glutamyl-tRNA(Asn/Gln) amidotransferase subunit B.